Consider the following 232-residue polypeptide: Large ribosomal subunit protein uL1 (232 aa).

The protein belongs to the universal ribosomal protein uL1 family. As to quaternary structure, part of the 50S ribosomal subunit.

Binds directly to 23S rRNA. The L1 stalk is quite mobile in the ribosome, and is involved in E site tRNA release. In terms of biological role, protein L1 is also a translational repressor protein, it controls the translation of the L11 operon by binding to its mRNA. The chain is Large ribosomal subunit protein uL1 from Bacillus licheniformis (strain ATCC 14580 / DSM 13 / JCM 2505 / CCUG 7422 / NBRC 12200 / NCIMB 9375 / NCTC 10341 / NRRL NRS-1264 / Gibson 46).